We begin with the raw amino-acid sequence, 216 residues long: MVVIGEKFPEVEVKTTHGVIKLPDYFAEQGKWFVLFSHPADFTPVCTTEFYAMQKRVDQFRELGVEPIGLSVDQVFSHIKWMEWIKENLGEEITFPVIADDRGELADKLGMIPSGATITARAVFIVDDKGIIRAIVYYPAEVGRDWDEILRLVKALKVSDEKGVALPHKWPNNELIGDKAIVPPASTVDEVKQREEAKAKGEIECYDWWFCYKKLE.

Residues 2–158 (VVIGEKFPEV…ILRLVKALKV (157 aa)) enclose the Thioredoxin domain. Cysteine 46 functions as the Cysteine sulfenic acid (-SOH) intermediate in the catalytic mechanism. Arginine 121 lines the substrate pocket. A disulfide bridge links cysteine 205 with cysteine 211.

Belongs to the peroxiredoxin family. Prx6 subfamily. Homodecamer. Pentamer of dimers that assemble into a ring structure.

It is found in the cytoplasm. The enzyme catalyses a hydroperoxide + [thioredoxin]-dithiol = an alcohol + [thioredoxin]-disulfide + H2O. Thiol-specific peroxidase that catalyzes the reduction of hydrogen peroxide and organic hydroperoxides to water and alcohols, respectively. Plays a role in cell protection against oxidative stress by detoxifying peroxides. This Thermococcus kodakarensis (strain ATCC BAA-918 / JCM 12380 / KOD1) (Pyrococcus kodakaraensis (strain KOD1)) protein is Peroxiredoxin.